Consider the following 171-residue polypeptide: Endoribonuclease YbeY (171 aa).

Zn(2+) contacts are provided by H130, H134, and H140.

This sequence belongs to the endoribonuclease YbeY family. The cofactor is Zn(2+).

Its subcellular location is the cytoplasm. Its function is as follows. Single strand-specific metallo-endoribonuclease involved in late-stage 70S ribosome quality control and in maturation of the 3' terminus of the 16S rRNA. In Neisseria meningitidis serogroup A / serotype 4A (strain DSM 15465 / Z2491), this protein is Endoribonuclease YbeY.